Consider the following 140-residue polypeptide: Ribosome-binding factor A (140 aa).

A disordered region spans residues 115–140; sequence EDERQQRGDIPPGSDQQPGSDEQPTG. Residues 128–140 show a composition bias toward polar residues; sequence SDQQPGSDEQPTG.

It belongs to the RbfA family. Monomer. Binds 30S ribosomal subunits, but not 50S ribosomal subunits or 70S ribosomes.

It is found in the cytoplasm. In terms of biological role, one of several proteins that assist in the late maturation steps of the functional core of the 30S ribosomal subunit. Associates with free 30S ribosomal subunits (but not with 30S subunits that are part of 70S ribosomes or polysomes). Required for efficient processing of 16S rRNA. May interact with the 5'-terminal helix region of 16S rRNA. The sequence is that of Ribosome-binding factor A from Synechococcus sp. (strain CC9605).